We begin with the raw amino-acid sequence, 373 residues long: MKGGKMDKLKPIIAIISLQFGYAGMYIITMVSFKHGMNHWILATYRHVVATIVIAPFALILERKIRPKMTWPLFLRILALGFLEPLLDQNLYYIGMKATSATYSSAFVNALPAITFIMAVIFRIETVNLKKTRSLAKVIGTAITVGGAMVMTLYKGPAIELFKTAHSSLHGGSSGTSSETTDQNWVTGTLAVMGSITTWAGFFILQSFTLKKYPAELSLVMWICAMGTVLNTIASLIMVRDVSAWKVGMDSGTLAAVYSGVVCSGMAYYIQSIVIRERGPVFTTSFSPMCMIITAFLGVLVLAEKIHLGSIIGAIFIVFGLYSVVWGKAKDEVISVEEKIGMQELPITNTSTKVEGGGITSEVNEGVTNNTQV.

A run of 10 helical transmembrane segments spans residues 11 to 31 (PIIA…ITMV), 41 to 61 (ILAT…ALIL), 67 to 87 (PKMT…EPLL), 102 to 122 (TYSS…AVIF), 139 to 159 (IGTA…GPAI), 185 to 205 (WVTG…FFIL), 219 to 239 (LVMW…LIMV), 255 to 275 (AAVY…SIVI), 281 to 301 (VFTT…GVLV), and 306 to 326 (IHLG…SVVW). EamA domains are found at residues 23 to 151 (AGMY…AMVM) and 198 to 325 (TWAG…YSVV).

Belongs to the drug/metabolite transporter (DMT) superfamily. Plant drug/metabolite exporter (P-DME) (TC 2.A.7.4) family.

Its subcellular location is the membrane. The chain is WAT1-related protein At4g08300 from Arabidopsis thaliana (Mouse-ear cress).